Reading from the N-terminus, the 207-residue chain is Protein N-terminal glutamine amidohydrolase (207 aa).

Catalysis depends on residues C30, H83, and D99.

It belongs to the NTAQ1 family. In terms of assembly, monomer.

It is found in the cytoplasm. The protein localises to the cytosol. Its subcellular location is the nucleus. It carries out the reaction N-terminal L-glutaminyl-[protein] + H2O = N-terminal L-glutamyl-[protein] + NH4(+). Functionally, mediates the side-chain deamidation of N-terminal glutamine residues to glutamate, an important step in N-end rule pathway of protein degradation. Conversion of the resulting N-terminal glutamine to glutamate renders the protein susceptible to arginylation, polyubiquitination and degradation as specified by the N-end rule. Does not act on substrates with internal or C-terminal glutamine and does not act on non-glutamine residues in any position. Does not deaminate acetylated N-terminal glutamine. With the exception of proline, all tested second-position residues on substrate peptides do not greatly influence the activity. In contrast, a proline at position 2, virtually abolishes deamidation of N-terminal glutamine. This is Protein N-terminal glutamine amidohydrolase (Ntaq1) from Rattus norvegicus (Rat).